The sequence spans 346 residues: GTPase Obg (346 aa).

The Obg domain occupies 1-159; it reads MQFVDEANIR…RNLGLELSVL (159 aa). The segment at 127-149 is disordered; it reads NVHFKSSTNRTPRQCTPGEPGDE. Polar residues predominate over residues 130–140; that stretch reads FKSSTNRTPRQ. Residues 160-333 form the OBG-type G domain; the sequence is ADVGLLGMPN…LVKEVAYGLE (174 aa). GTP contacts are provided by residues 166-173, 191-195, 213-216, 283-286, and 314-316; these read GMPNAGKS, FTTLY, DIPG, NKTD, and SAV. Mg(2+) is bound by residues S173 and T193.

This sequence belongs to the TRAFAC class OBG-HflX-like GTPase superfamily. OBG GTPase family. Monomer. Mg(2+) serves as cofactor.

Its subcellular location is the cytoplasm. In terms of biological role, an essential GTPase which binds GTP, GDP and possibly (p)ppGpp with moderate affinity, with high nucleotide exchange rates and a fairly low GTP hydrolysis rate. Plays a role in control of the cell cycle, stress response, ribosome biogenesis and in those bacteria that undergo differentiation, in morphogenesis control. The sequence is that of GTPase Obg from Hydrogenovibrio crunogenus (strain DSM 25203 / XCL-2) (Thiomicrospira crunogena).